We begin with the raw amino-acid sequence, 202 residues long: MDVILLERVEKLGQIGDVVSVKAGFARNYLLPRKKALRANEANKKVFEANRAQIEADNANRRGNAETEAKALDDKSVTLIRQASNTGQLYGSVSARDIVEALAEDGIKVAKSGVVLGRPIKTIGLHEVKISLHAEVSRTVKVNVARSPEEAELQSQGVDVMAQLFERDEAGFTEDYDPNAEPGEIPTELQDEAPAAEATDEA.

Positions 168–202 (DEAGFTEDYDPNAEPGEIPTELQDEAPAAEATDEA) are disordered. The span at 192 to 202 (EAPAAEATDEA) shows a compositional bias: low complexity.

Belongs to the bacterial ribosomal protein bL9 family.

Binds to the 23S rRNA. The chain is Large ribosomal subunit protein bL9 from Rhizorhabdus wittichii (strain DSM 6014 / CCUG 31198 / JCM 15750 / NBRC 105917 / EY 4224 / RW1) (Sphingomonas wittichii).